A 1597-amino-acid chain; its full sequence is Pentafunctional AROM polypeptide (1597 aa).

The 3-dehydroquinate synthase stretch occupies residues 1 to 384; that stretch reads MGVPTKISIL…HEPRASTVSN (384 aa). Residues 44–46, 81–84, 114–116, and Asp-119 contribute to the NAD(+) site; these read DTN, ESSK, and GGV. Arg-130 is a 7-phospho-2-dehydro-3-deoxy-D-arabino-heptonate binding site. 139–140 is a binding site for NAD(+); it reads TT. Residues Asp-146 and Lys-152 each coordinate 7-phospho-2-dehydro-3-deoxy-D-arabino-heptonate. Lys-161 provides a ligand contact to NAD(+). Asn-162 serves as a coordination point for 7-phospho-2-dehydro-3-deoxy-D-arabino-heptonate. NAD(+) contacts are provided by residues 179 to 182 and Asn-190; that span reads FLNT. Position 194 (Glu-194) interacts with Zn(2+). 7-phospho-2-dehydro-3-deoxy-D-arabino-heptonate contacts are provided by residues 194 to 197 and Lys-250; that span reads EVIK. Glu-260 (proton acceptor; for 3-dehydroquinate synthase activity) is an active-site residue. Residues 264–268 and His-271 each bind 7-phospho-2-dehydro-3-deoxy-D-arabino-heptonate; that span reads RNLLN. His-271 contributes to the Zn(2+) binding site. The active-site Proton acceptor; for 3-dehydroquinate synthase activity is the His-275. His-287 and Lys-356 together coordinate 7-phospho-2-dehydro-3-deoxy-D-arabino-heptonate. His-287 contacts Zn(2+). The EPSP synthase stretch occupies residues 397 to 842; sequence VSPGVPKNLN…WDSLAQTFKV (446 aa). Catalysis depends on Cys-824, which acts as the For EPSP synthase activity. Residues 866 to 1057 form a shikimate kinase region; the sequence is ASIFIIGMRG…RSKENTFFVS (192 aa). 872 to 879 contributes to the ATP binding site; that stretch reads GMRGAGKT. The 3-dehydroquinase stretch occupies residues 1058–1278; that stretch reads LTLPDLAPAA…AAPGQLSARE (221 aa). His-1181 functions as the Proton acceptor; for 3-dehydroquinate dehydratase activity in the catalytic mechanism. Residue Lys-1209 is the Schiff-base intermediate with substrate; for 3-dehydroquinate dehydratase activity of the active site. The segment at 1291 to 1597 is shikimate dehydrogenase; the sequence is SKKFAVIGNP…VQPKDDDIST (307 aa).

The protein in the N-terminal section; belongs to the sugar phosphate cyclases superfamily. Dehydroquinate synthase family. In the 2nd section; belongs to the EPSP synthase family. It in the 3rd section; belongs to the shikimate kinase family. This sequence in the 4th section; belongs to the type-I 3-dehydroquinase family. The protein in the C-terminal section; belongs to the shikimate dehydrogenase family. As to quaternary structure, homodimer. Zn(2+) serves as cofactor.

Its subcellular location is the cytoplasm. The enzyme catalyses 7-phospho-2-dehydro-3-deoxy-D-arabino-heptonate = 3-dehydroquinate + phosphate. It catalyses the reaction 3-dehydroquinate = 3-dehydroshikimate + H2O. It carries out the reaction shikimate + NADP(+) = 3-dehydroshikimate + NADPH + H(+). The catalysed reaction is shikimate + ATP = 3-phosphoshikimate + ADP + H(+). The enzyme catalyses 3-phosphoshikimate + phosphoenolpyruvate = 5-O-(1-carboxyvinyl)-3-phosphoshikimate + phosphate. The protein operates within metabolic intermediate biosynthesis; chorismate biosynthesis; chorismate from D-erythrose 4-phosphate and phosphoenolpyruvate: step 2/7. It functions in the pathway metabolic intermediate biosynthesis; chorismate biosynthesis; chorismate from D-erythrose 4-phosphate and phosphoenolpyruvate: step 3/7. It participates in metabolic intermediate biosynthesis; chorismate biosynthesis; chorismate from D-erythrose 4-phosphate and phosphoenolpyruvate: step 4/7. Its pathway is metabolic intermediate biosynthesis; chorismate biosynthesis; chorismate from D-erythrose 4-phosphate and phosphoenolpyruvate: step 5/7. The protein operates within metabolic intermediate biosynthesis; chorismate biosynthesis; chorismate from D-erythrose 4-phosphate and phosphoenolpyruvate: step 6/7. In terms of biological role, the AROM polypeptide catalyzes 5 consecutive enzymatic reactions in prechorismate polyaromatic amino acid biosynthesis. The sequence is that of Pentafunctional AROM polypeptide from Blastomyces gilchristii (strain SLH14081) (Blastomyces dermatitidis).